Consider the following 660-residue polypeptide: Bifunctional polymyxin resistance protein ArnA (660 aa).

The segment at 1–304 is formyltransferase ArnAFT; that stretch reads MKAVIFAYHD…TLGLVAGARL (304 aa). The active-site Proton donor; for formyltransferase activity is His104. Residues Arg114 and 136–140 contribute to the (6R)-10-formyltetrahydrofolate site; that span reads VKRAD. A dehydrogenase ArnADH region spans residues 314 to 660; that stretch reads RRIRVLILGV…RSVDVAERAS (347 aa). NAD(+) is bound by residues Asp347 and 368–369; that span reads DI. Residues Ala393, Tyr398, and 432-433 contribute to the UDP-alpha-D-glucuronate site; that span reads TS. Glu434 serves as the catalytic Proton acceptor; for decarboxylase activity. UDP-alpha-D-glucuronate-binding positions include Arg460, Asn492, 526–535, and Tyr613; that span reads KLIDGGQQKR. Arg619 acts as the Proton donor; for decarboxylase activity in catalysis.

The protein in the N-terminal section; belongs to the Fmt family. UDP-L-Ara4N formyltransferase subfamily. It in the C-terminal section; belongs to the NAD(P)-dependent epimerase/dehydratase family. UDP-glucuronic acid decarboxylase subfamily. Homohexamer, formed by a dimer of trimers.

The catalysed reaction is UDP-alpha-D-glucuronate + NAD(+) = UDP-beta-L-threo-pentopyranos-4-ulose + CO2 + NADH. It carries out the reaction UDP-4-amino-4-deoxy-beta-L-arabinose + (6R)-10-formyltetrahydrofolate = UDP-4-deoxy-4-formamido-beta-L-arabinose + (6S)-5,6,7,8-tetrahydrofolate + H(+). It functions in the pathway nucleotide-sugar biosynthesis; UDP-4-deoxy-4-formamido-beta-L-arabinose biosynthesis; UDP-4-deoxy-4-formamido-beta-L-arabinose from UDP-alpha-D-glucuronate: step 1/3. It participates in nucleotide-sugar biosynthesis; UDP-4-deoxy-4-formamido-beta-L-arabinose biosynthesis; UDP-4-deoxy-4-formamido-beta-L-arabinose from UDP-alpha-D-glucuronate: step 3/3. Its pathway is bacterial outer membrane biogenesis; lipopolysaccharide biosynthesis. In terms of biological role, bifunctional enzyme that catalyzes the oxidative decarboxylation of UDP-glucuronic acid (UDP-GlcUA) to UDP-4-keto-arabinose (UDP-Ara4O) and the addition of a formyl group to UDP-4-amino-4-deoxy-L-arabinose (UDP-L-Ara4N) to form UDP-L-4-formamido-arabinose (UDP-L-Ara4FN). The modified arabinose is attached to lipid A and is required for resistance to polymyxin and cationic antimicrobial peptides. This is Bifunctional polymyxin resistance protein ArnA from Salmonella dublin (strain CT_02021853).